The chain runs to 154 residues: Protein X (154 aa).

The interval 68 to 117 is mitochondrial targeting sequence; sequence PCALRFTSARCMETTVNAPRNLPTVLHKRTLGLSAMSTTKIETYFKDCVF.

The protein belongs to the orthohepadnavirus protein X family. As to quaternary structure, may form homodimer. May interact with host CEBPA, CFLAR, CREB1, DDB1, E4F1, HBXIP, HSPD1/HSP60, NFKBIA, POLR2E and SMAD4. Interacts with host SMC5-SMC6 complex and induces its degradation. Interacts with host TRPC4AP; leading to prevent ubiquitination of TRPC4AP. Interacts with host PLSCR1; this interaction promotes ubiquitination and degradation of HBx and impairs HBx-mediated cell proliferation. A fraction may be phosphorylated in insect cells and HepG2 cells, a human hepatoblastoma cell line. Phosphorylated in vitro by host protein kinase C or mitogen-activated protein kinase. N-acetylated in insect cells.

The protein resides in the host cytoplasm. It localises to the host nucleus. Its subcellular location is the host mitochondrion. Its function is as follows. Multifunctional protein that plays a role in silencing host antiviral defenses and promoting viral transcription. Does not seem to be essential for HBV infection. May be directly involved in development of cirrhosis and liver cancer (hepatocellular carcinoma). Most of cytosolic activities involve modulation of cytosolic calcium. The effect on apoptosis is controversial depending on the cell types in which the studies have been conducted. May induce apoptosis by localizing in mitochondria and causing loss of mitochondrial membrane potential. May also modulate apoptosis by binding host CFLAR, a key regulator of the death-inducing signaling complex (DISC). Promotes viral transcription by using the host E3 ubiquitin ligase DDB1 to target the SMC5-SMC6 complex to proteasomal degradation. This host complex would otherwise bind to viral episomal DNA, and prevents its transcription. Moderately stimulates transcription of many different viral and cellular transcription elements. Promoters and enhancers stimulated by HBx contain DNA binding sites for NF-kappa-B, AP-1, AP-2, c-EBP, ATF/CREB, or the calcium-activated factor NF-AT. In Gorilla gorilla (western gorilla), this protein is Protein X.